Reading from the N-terminus, the 183-residue chain is MTKAHYIDFFKQAADKKIQWLKEELTKIRTGRPNPKIFDNLLIESYGQKMPLISLAQVTINPPREIIIKPFDPKSNTNAIYSEIQRANIGVQPVIDGEKIRVNFPQITQETRLENIKHVKKIIEQIYQELRVVRRDALQMIKKDNHNEDLENSLKAEIEKINKNYSNQLEEIQKDKEKELLTI.

Belongs to the RRF family.

The protein localises to the cytoplasm. Responsible for the release of ribosomes from messenger RNA at the termination of protein biosynthesis. May increase the efficiency of translation by recycling ribosomes from one round of translation to another. The chain is Ribosome-recycling factor from Mycoplasma genitalium (strain ATCC 33530 / DSM 19775 / NCTC 10195 / G37) (Mycoplasmoides genitalium).